The sequence spans 379 residues: Serpin B5 (379 aa).

Asn-133, Asn-176, and Asn-361 each carry an N-linked (GlcNAc...) asparagine glycan.

Belongs to the serpin family. Ov-serpin subfamily.

The protein resides in the secreted. It is found in the extracellular space. In terms of biological role, may not exhibit serine protease inhibitory activity. The protein is Serpin B5 (serpinb5) of Xenopus tropicalis (Western clawed frog).